The sequence spans 300 residues: Bifunctional protein FolD 2 (300 aa).

NADP(+) is bound by residues 166–168 (GRS), Ser191, and Ile232.

Belongs to the tetrahydrofolate dehydrogenase/cyclohydrolase family. In terms of assembly, homodimer.

It catalyses the reaction (6R)-5,10-methylene-5,6,7,8-tetrahydrofolate + NADP(+) = (6R)-5,10-methenyltetrahydrofolate + NADPH. It carries out the reaction (6R)-5,10-methenyltetrahydrofolate + H2O = (6R)-10-formyltetrahydrofolate + H(+). The protein operates within one-carbon metabolism; tetrahydrofolate interconversion. Catalyzes the oxidation of 5,10-methylenetetrahydrofolate to 5,10-methenyltetrahydrofolate and then the hydrolysis of 5,10-methenyltetrahydrofolate to 10-formyltetrahydrofolate. This is Bifunctional protein FolD 2 from Roseobacter denitrificans (strain ATCC 33942 / OCh 114) (Erythrobacter sp. (strain OCh 114)).